The chain runs to 360 residues: Phospho-N-acetylmuramoyl-pentapeptide-transferase (360 aa).

Transmembrane regions (helical) follow at residues 27-47 (GAFM…INVL), 71-91 (TPTM…LLWA), 93-113 (WDNP…LIGF), 134-154 (LALG…NHPA), 168-188 (TLIN…VGSA), 199-219 (GLAI…AYAV), 239-259 (ILIF…YNAP), 262-282 (AVFM…AIAV), 288-308 (LVLA…IIQV), and 337-357 (TIVI…LATL).

This sequence belongs to the glycosyltransferase 4 family. MraY subfamily. Mg(2+) is required as a cofactor.

The protein resides in the cell inner membrane. The enzyme catalyses UDP-N-acetyl-alpha-D-muramoyl-L-alanyl-gamma-D-glutamyl-meso-2,6-diaminopimeloyl-D-alanyl-D-alanine + di-trans,octa-cis-undecaprenyl phosphate = di-trans,octa-cis-undecaprenyl diphospho-N-acetyl-alpha-D-muramoyl-L-alanyl-D-glutamyl-meso-2,6-diaminopimeloyl-D-alanyl-D-alanine + UMP. It functions in the pathway cell wall biogenesis; peptidoglycan biosynthesis. Catalyzes the initial step of the lipid cycle reactions in the biosynthesis of the cell wall peptidoglycan: transfers peptidoglycan precursor phospho-MurNAc-pentapeptide from UDP-MurNAc-pentapeptide onto the lipid carrier undecaprenyl phosphate, yielding undecaprenyl-pyrophosphoryl-MurNAc-pentapeptide, known as lipid I. The chain is Phospho-N-acetylmuramoyl-pentapeptide-transferase from Ruegeria pomeroyi (strain ATCC 700808 / DSM 15171 / DSS-3) (Silicibacter pomeroyi).